The chain runs to 368 residues: Glutaminyl-peptide cyclotransferase (368 aa).

Residues 1 to 23 form the signal peptide; that stretch reads MAGERRDSKAAAFFCLAWALCLA. Asn53 is a glycosylation site (N-linked (GlcNAc...) asparagine). Cys143 and Cys169 are disulfide-bonded. Asp164 provides a ligand contact to Zn(2+). Glu207 (proton acceptor) is an active-site residue. Residue Glu208 participates in Zn(2+) binding. Asp254 functions as the Proton acceptor in the catalytic mechanism. Asn292 is a glycosylation site (N-linked (GlcNAc...) asparagine). His336 contributes to the Zn(2+) binding site. Residue Asn352 is glycosylated (N-linked (GlcNAc...) asparagine).

This sequence belongs to the glutaminyl-peptide cyclotransferase family. Expressed by the venom gland.

The protein resides in the secreted. The enzyme catalyses N-terminal L-glutaminyl-[peptide] = N-terminal 5-oxo-L-prolyl-[peptide] + NH4(+). Responsible for the biosynthesis of pyroglutamyl peptides. Has a bias against acidic and tryptophan residues adjacent to the N-terminal glutaminyl residue and a lack of importance of chain length after the second residue. Also catalyzes N-terminal pyroglutamate formation. This is Glutaminyl-peptide cyclotransferase (QPCT) from Boiga irregularis (Brown tree snake).